A 239-amino-acid chain; its full sequence is ATP synthase subunit b (239 aa).

A compositionally biased stretch (low complexity) spans 1-22; sequence MYAQEAQQKPEAQQSAPAAEQP. The interval 1–64 is disordered; it reads MYAQEAQQKP…GEEEAGEHME (64 aa). 2 stretches are compositionally biased toward basic and acidic residues: residues 23–33 and 45–64; these read KPAEEQAKPEQ and ELSE…EHME. The chain crosses the membrane as a helical span at residues 85 to 105; that stretch reads SYWIAMAFNFAIVFALLGWAM.

The protein belongs to the ATPase B chain family. F-type ATPases have 2 components, F(1) - the catalytic core - and F(0) - the membrane proton channel. F(1) has five subunits: alpha(3), beta(3), gamma(1), delta(1), epsilon(1). F(0) has three main subunits: a(1), b(2) and c(10-14). The alpha and beta chains form an alternating ring which encloses part of the gamma chain. F(1) is attached to F(0) by a central stalk formed by the gamma and epsilon chains, while a peripheral stalk is formed by the delta and b chains.

It is found in the cell inner membrane. In terms of biological role, f(1)F(0) ATP synthase produces ATP from ADP in the presence of a proton or sodium gradient. F-type ATPases consist of two structural domains, F(1) containing the extramembraneous catalytic core and F(0) containing the membrane proton channel, linked together by a central stalk and a peripheral stalk. During catalysis, ATP synthesis in the catalytic domain of F(1) is coupled via a rotary mechanism of the central stalk subunits to proton translocation. Its function is as follows. Component of the F(0) channel, it forms part of the peripheral stalk, linking F(1) to F(0). The sequence is that of ATP synthase subunit b from Koribacter versatilis (strain Ellin345).